The following is a 172-amino-acid chain: Cold-inducible RNA-binding protein (172 aa).

In terms of domain architecture, RRM spans 6–84 (GKLFVGGLSF…RQIRVDQAGK (79 aa)). The tract at residues 70 to 172 (KSVDGRQIRV…SYDSYATHNE (103 aa)) is disordered. Composition is skewed to gly residues over residues 93–105 (YRGG…GFFR) and 114–137 (FSRG…GYGG). Phosphoserine is present on residues Ser130, Ser138, Ser146, Ser156, Ser159, and Ser163. Over residues 138–172 (SRDYYASRSQGGSYGYRSSGGSYRDSYDSYATHNE) the composition is skewed to low complexity.

Interacts with EIF4G1. Associates with ribosomes. Post-translationally, methylated on arginine residues. Methylation of the RGG motifs is a prerequisite for recruitment into SGs. In terms of processing, phosphorylated by CK2, GSK3A and GSK3B. Phosphorylation by GSK3B increases RNA-binding activity to the TXN 3'-UTR transcript upon exposure to UV radiation. As to expression, ubiquitous.

The protein resides in the nucleus. The protein localises to the nucleoplasm. It localises to the cytoplasm. Its function is as follows. Cold-inducible mRNA binding protein that plays a protective role in the genotoxic stress response by stabilizing transcripts of genes involved in cell survival. Promotes assembly of stress granules (SGs), when overexpressed. Seems to play an essential role in cold-induced suppression of cell proliferation. Acts as a translational repressor. Acts as a translational activator. Binds specifically to the 3'-untranslated regions (3'-UTRs) of stress-responsive transcripts RPA2 and TXN. The protein is Cold-inducible RNA-binding protein (Cirbp) of Mus musculus (Mouse).